A 222-amino-acid polypeptide reads, in one-letter code: Glutathione S-transferase alpha M14 (222 aa).

Residue M1 is modified to N-acetylmethionine. At A2 the chain carries N-acetylalanine; in Glutathione S-transferase alpha M14, N-terminally processed. The GST N-terminal domain maps to 3 to 83 (GKPILHYFNG…YIATKYNLYG (81 aa)). At K4 the chain carries N6-succinyllysine. Residues Y9, 54 to 55 (QV), and 67 to 68 (QT) contribute to the glutathione site. The GST C-terminal domain maps to 85-208 (DAKERALIDM…QPGSQRKPPM (124 aa)). Residues 199–222 (QPGSQRKPPMDAKKIRRSQEYFPD) are disordered. Over residues 206–222 (PPMDAKKIRRSQEYFPD) the composition is skewed to basic and acidic residues.

This sequence belongs to the GST superfamily. Alpha family. Homodimer or heterodimer of GSTA1 and GSTA2.

The protein resides in the cytoplasm. The enzyme catalyses RX + glutathione = an S-substituted glutathione + a halide anion + H(+). It carries out the reaction prostaglandin A2 + glutathione = prostaglandin A2-S-(R)-glutathione. The catalysed reaction is prostaglandin J2 + glutathione = prostaglandin J2-S-(R)-glutathione. It catalyses the reaction (13S)-hydroperoxy-(9Z,11E)-octadecadienoate + 2 glutathione = (13S)-hydroxy-(9Z,11E)-octadecadienoate + glutathione disulfide + H2O. The enzyme catalyses androst-5-ene-3,17-dione = androst-4-ene-3,17-dione. Its function is as follows. Glutathione S-transferase that catalyzes the nucleophilic attack of the sulfur atom of glutathione on the electrophilic groups of a wide range of exogenous and endogenous compounds. Involved in the formation of glutathione conjugates of both prostaglandin A2 (PGA2) and prostaglandin J2 (PGJ2). It also catalyzes the isomerization of D5-androstene-3,17-dione (AD) into D4-androstene-3,17-dione and may therefore play an important role in hormone biosynthesis. Through its glutathione-dependent peroxidase activity toward the fatty acid hydroperoxide (13S)-hydroperoxy-(9Z,11E)-octadecadienoate/13-HPODE it is also involved in the metabolism of oxidized linoleic acid. This is Glutathione S-transferase alpha M14 from Sus scrofa (Pig).